A 309-amino-acid polypeptide reads, in one-letter code: MDVGQKKRGADKTALATTDEQGALSKPTWIRAKAPISPEVGRLTGILRDLHLHTVCEEASCPNLGECFKRGTATFMIMGDVCTRRCPFCDVAHGRPAALDTEEPGHLADAIGAMKLKYVVITSVTRDDLEDGGAAHFAQCIESIRKKTEGVKVEILVPDFRGHVDAALKNLGNCLPDVFNHNLETVPRLYAESRPGARYHESLRLLQRFKETYPGIPTKSGLMLGLGETDEEILEVMRDLRVHGCDMLTIGQYLRPSRHHLPVQRYVTPEQFEAFRVAGLKMGFSQVASGPLVRSSYHADLQAKEVLHT.

[4Fe-4S] cluster is bound by residues Cys56, Cys61, Cys67, Cys82, Cys86, Cys89, and Ser296. A Radical SAM core domain is found at 68–285 (FKRGTATFMI…RVAGLKMGFS (218 aa)).

This sequence belongs to the radical SAM superfamily. Lipoyl synthase family. Requires [4Fe-4S] cluster as cofactor.

The protein resides in the cytoplasm. It catalyses the reaction [[Fe-S] cluster scaffold protein carrying a second [4Fe-4S](2+) cluster] + N(6)-octanoyl-L-lysyl-[protein] + 2 oxidized [2Fe-2S]-[ferredoxin] + 2 S-adenosyl-L-methionine + 4 H(+) = [[Fe-S] cluster scaffold protein] + N(6)-[(R)-dihydrolipoyl]-L-lysyl-[protein] + 4 Fe(3+) + 2 hydrogen sulfide + 2 5'-deoxyadenosine + 2 L-methionine + 2 reduced [2Fe-2S]-[ferredoxin]. Its pathway is protein modification; protein lipoylation via endogenous pathway; protein N(6)-(lipoyl)lysine from octanoyl-[acyl-carrier-protein]: step 2/2. Functionally, catalyzes the radical-mediated insertion of two sulfur atoms into the C-6 and C-8 positions of the octanoyl moiety bound to the lipoyl domains of lipoate-dependent enzymes, thereby converting the octanoylated domains into lipoylated derivatives. This chain is Lipoyl synthase, found in Syntrophotalea carbinolica (strain DSM 2380 / NBRC 103641 / GraBd1) (Pelobacter carbinolicus).